Reading from the N-terminus, the 1092-residue chain is MEHSPEEGASPEPSGQPPATDSTRDGGSGVPPAGPGAASEALAVLTSFGRRLLVLVPVYLAGAAGLSVGFVLFGLALYLGWRRVRDGKERSLRAARQLLDDEERITAETLYMSHRELPAWVSFPDVEKAEWLNKIVAQVWPFLGQYMEKLLAETVAPAVRGANPHLQTFTFTRVELGEKPLRIIGVKVHPSQRKDQILLDLNVSYVGDVQIDVEVKKYFCKAGVKGMQLHGVLRVILEPLTGDLPIVGAVSMFFIKRPTLDINWTGMTNLLDIPGLSSLSDTMIMDSIAAFLVLPNRLLVPLVPDLQDVAQLRSPLPRGIIRIHLLAARGLSSKDKYVKGLIEGKSDPYALVRVGTQTFCSRVIDEELNPHWGETYEVIVHEVPGQEIEVEVFDKDPDKDDFLGRMKLDVGKVLQAGVLDNWYPLQGGQGQVHLRLEWLSLLPDAEKLDQVLQWNRGITSRPEPPSAAILVVYLDRAQDLPLKKGNKEPNPMVQLSVQDVTRESKATYSTNSPVWEEAFRFFLQDPRSQELDVQVKDDSRALTLGALTLPLARLLTASELTLDQWFQLSSSGPNSRLYMKLVMRILYLDYSEIRFPTVPGAQDWDRESLETGSSVDAPPRPYHTTPNSHFGTENVLRIHVLEAQDLIAKDRFLGGLVKGKSDPYVKLKVAGKSFRTHVVREDLNPRWNEVFEVIVTSIPGQELEIEVFDKDLDKDDFLGRYKVSLTTVLNSGFLDEWLTLEDVPSGRLHLRLERLTPRPTAAELEEVLQVNSLIQTQKSSELAAALLSVFLERAEDLPLRKGTKPPSPYATITVGETSHKTKTVSQSSAPVWEESASFLIRKPHAESLELQVRGEGTGTLGSVSLPLSELLQEDQLCLDHWFALSGQGQVLMRAQLGILVSQHSGVEAHSHSYSHSHSSSSLNDEPEALGGPTHPASPVLEVRHRLTHGDSPSEAPVGPLGQVKLTVWYHSDEQKLISIIHSCRALRQNGRDLPDPYVSVLLLPDKNRSTKRKTPQKKRTLNPEFNERFEWDLPLDGTLRRKLDVSVKSNSSFMSRERELLGKVQLDLAEIDLSQGAAQWYDLMDDRDKGGS.

Methionine 1 carries the post-translational modification N-acetylmethionine. The Cytoplasmic portion of the chain corresponds to 1-28 (MEHSPEEGASPEPSGQPPATDSTRDGGS). A disordered region spans residues 1 to 36 (MEHSPEEGASPEPSGQPPATDSTRDGGSGVPPAGPG). The helical transmembrane segment at 29 to 49 (GVPPAGPGAASEALAVLTSFG) threads the bilayer. At 50-52 (RRL) the chain is on the lumenal side. Residues 53 to 73 (LVLVPVYLAGAAGLSVGFVLF) traverse the membrane as a helical segment. Topologically, residues 74–1092 (GLALYLGWRR…LMDDRDKGGS (1019 aa)) are cytoplasmic. An SMP-LTD domain is found at 125–303 (DVEKAEWLNK…LPNRLLVPLV (179 aa)). 4 consecutive C2 domains span residues 302–423 (LVPD…DNWY), 444–570 (DAEK…QLSS), 616–738 (DAPP…DEWL), and 769–886 (QVNS…ALSG). Serine 314 is subject to Phosphoserine; by CDK5. Lysine 334, aspartate 335, aspartate 347, aspartate 394, aspartate 396, aspartate 398, aspartate 400, and aspartate 401 together coordinate Ca(2+). Residues 604–628 (WDRESLETGSSVDAPPRPYHTTPNS) are disordered. An N6-acetyllysine modification is found at lysine 804. Serine 807 carries the phosphoserine modification. The interval 909–937 (HSHSYSHSHSSSSLNDEPEALGGPTHPAS) is disordered. A compositionally biased stretch (low complexity) spans 911 to 921 (HSYSHSHSSSS). Serine 937 and serine 951 each carry phosphoserine. The C2 5 domain maps to 959-1081 (PLGQVKLTVW…DLSQGAAQWY (123 aa)). Residue tyrosine 997 is modified to Phosphotyrosine. The interval 1006–1013 (KNRSTKRK) is required for phosphatidylinositol 4,5-bisphosphate-dependent location at the cell membrane.

The protein belongs to the extended synaptotagmin family. Interacts with ESYT2 and ESYT3. Interacts with ADGRD1; inhibiting the G-protein-coupled receptor activity of ADGRD1. Interaction with ADGRD1 is abolished when cytosolic calcium increases, relieving ADGRD1 G-protein-coupled receptor activity. Interacts (phosphorylated form) with SLC2A4. In terms of processing, phosphorylated on Ser residues in insulin-treated adipocytes (in vitro); this promotes interaction with SLC2A4.

The protein localises to the endoplasmic reticulum membrane. It localises to the cell membrane. In terms of biological role, binds calcium (via the C2 domains) and translocates to sites of contact between the endoplasmic reticulum and the cell membrane in response to increased cytosolic calcium levels. Helps tether the endoplasmic reticulum to the cell membrane and promotes the formation of appositions between the endoplasmic reticulum and the cell membrane. Acts as an inhibitor of ADGRD1 G-protein-coupled receptor activity in absence of cytosolic calcium. Binds glycerophospholipids in a barrel-like domain and may play a role in cellular lipid transport. In Mus musculus (Mouse), this protein is Extended synaptotagmin-1 (Esyt1).